The primary structure comprises 347 residues: NADH-ubiquinone oxidoreductase chain 2 (347 aa).

Transmembrane regions (helical) follow at residues 1–21 (MNPM…FIVT), 25–45 (HWFM…PVLM), 59–79 (YFLT…INLM), 96–116 (MLIT…FWVP), 122–142 (VSLP…LSLL), 149–169 (VNMN…GWGG), 178–198 (IMAY…VYNP), 201–221 (SLLN…LLIF), 237–257 (APII…LPPL), 274–294 (NSVI…FFYM), and 326–346 (MLPL…LILL).

The protein belongs to the complex I subunit 2 family. In terms of assembly, core subunit of respiratory chain NADH dehydrogenase (Complex I) which is composed of 45 different subunits. Interacts with TMEM242.

Its subcellular location is the mitochondrion inner membrane. It catalyses the reaction a ubiquinone + NADH + 5 H(+)(in) = a ubiquinol + NAD(+) + 4 H(+)(out). In terms of biological role, core subunit of the mitochondrial membrane respiratory chain NADH dehydrogenase (Complex I) that is believed to belong to the minimal assembly required for catalysis. Complex I functions in the transfer of electrons from NADH to the respiratory chain. The immediate electron acceptor for the enzyme is believed to be ubiquinone. The chain is NADH-ubiquinone oxidoreductase chain 2 from Crocidura suaveolens gueldenstaedtii (Gueldenstaedt's shrew).